The following is a 397-amino-acid chain: Nuclear pore complex-interacting protein family member B2 (397 aa).

Positions 256–397 (NRMGHQPPPP…KLRTGHCTQA (142 aa)) are disordered. Over residues 267–277 (QQHSITDNSLS) the composition is skewed to polar residues. Positions 278–287 (LKTPPECLLT) are enriched in low complexity. Positions 382-391 (KRRRLSKLRT) are enriched in basic residues.

It belongs to the NPIP family.

It is found in the nucleus. In Homo sapiens (Human), this protein is Nuclear pore complex-interacting protein family member B2.